We begin with the raw amino-acid sequence, 367 residues long: MSDGAVVRALVLEAPRRLVVRQYRLPRIGDDDALVRVEACGLCGTDHEQYTGELAGGFAFVPGHETVGTIAAIGPRAEQRWGVSAGDRVAVEVFQSCRQCANCRGGEYRRCVRHGLADMYGFIPVDREPGLWGGYAEYQYLAPDSMVLRVAGDLSPEVATLFNPLGAGIRWGVTIPETKPGDVVAVLGPGIRGLCAAAAAKGAGAGFVMVTGLGPRDADRLALAAQFGADLAVDVAIDDPVAALTEQTGGLADVVVDVTAKAPAAFAQAIALARPAGTVVVAGTRGVGSGAPGFSPDVVVFKELRVLGALGVDATAYRAALDLLVSGRYPFASLPRRCVRLEGAEDLLATMAGERDGVPPIHGVLTP.

Positions 43, 64, 97, 100, 103, 111, and 163 each coordinate Zn(2+).

It belongs to the zinc-containing alcohol dehydrogenase family. Zn(2+) is required as a cofactor.

The catalysed reaction is a primary alcohol + NAD(+) = an aldehyde + NADH + H(+). The enzyme catalyses a secondary alcohol + NAD(+) = a ketone + NADH + H(+). In Mycobacterium tuberculosis (strain CDC 1551 / Oshkosh), this protein is Probable alcohol dehydrogenase adh (adh).